The sequence spans 1551 residues: Pentafunctional AROM polypeptide (1551 aa).

The 3-dehydroquinate synthase stretch occupies residues 1-379 (MSIEKVPILG…YQLKAHEVSK (379 aa)). Residues 42–44 (DTN), 80–83 (ENNK), 111–113 (GGV), and Asp116 each bind NAD(+). Arg127 lines the 7-phospho-2-dehydro-3-deoxy-D-arabino-heptonate pocket. An NAD(+)-binding site is contributed by 136–137 (TT). 7-phospho-2-dehydro-3-deoxy-D-arabino-heptonate-binding residues include Asp143 and Lys149. Residue Lys158 coordinates NAD(+). Asn159 serves as a coordination point for 7-phospho-2-dehydro-3-deoxy-D-arabino-heptonate. NAD(+) is bound by residues 176–179 (YLES) and Asn187. Glu191 serves as a coordination point for Zn(2+). 7-phospho-2-dehydro-3-deoxy-D-arabino-heptonate contacts are provided by residues 191 to 194 (EVVK) and Lys243. Residue Glu253 is the Proton acceptor; for 3-dehydroquinate synthase activity of the active site. Residues 257 to 261 (RNLLN) and His264 each bind 7-phospho-2-dehydro-3-deoxy-D-arabino-heptonate. Zn(2+) is bound at residue His264. His268 acts as the Proton acceptor; for 3-dehydroquinate synthase activity in catalysis. The 7-phospho-2-dehydro-3-deoxy-D-arabino-heptonate site is built by His280 and Lys351. His280 is a Zn(2+) binding site. The EPSP synthase stretch occupies residues 392-838 (VHPFKQPPQE…WDILHSKFNI (447 aa)). Positions 858 to 1048 (DKSIIIIGMR…IPSGRSAALS (191 aa)) are shikimate kinase. ATP is bound at residue 865–872 (GMRGTGKS). The tract at residues 1049–1258 (LTVPDLNAIS…NEDGLLTIKE (210 aa)) is 3-dehydroquinase. The active-site Schiff-base intermediate with substrate; for 3-dehydroquinate dehydratase activity is Lys1194. Positions 1271–1551 (AKKFWVIGSP…DVIHRAVVEE (281 aa)) are shikimate dehydrogenase.

In the N-terminal section; belongs to the sugar phosphate cyclases superfamily. Dehydroquinate synthase family. It in the 2nd section; belongs to the EPSP synthase family. This sequence in the 3rd section; belongs to the shikimate kinase family. The protein in the 4th section; belongs to the type-I 3-dehydroquinase family. In the C-terminal section; belongs to the shikimate dehydrogenase family. Homodimer. It depends on Zn(2+) as a cofactor.

It is found in the cytoplasm. It catalyses the reaction 7-phospho-2-dehydro-3-deoxy-D-arabino-heptonate = 3-dehydroquinate + phosphate. The enzyme catalyses 3-dehydroquinate = 3-dehydroshikimate + H2O. It carries out the reaction shikimate + NADP(+) = 3-dehydroshikimate + NADPH + H(+). The catalysed reaction is shikimate + ATP = 3-phosphoshikimate + ADP + H(+). It catalyses the reaction 3-phosphoshikimate + phosphoenolpyruvate = 5-O-(1-carboxyvinyl)-3-phosphoshikimate + phosphate. It functions in the pathway metabolic intermediate biosynthesis; chorismate biosynthesis; chorismate from D-erythrose 4-phosphate and phosphoenolpyruvate: step 2/7. The protein operates within metabolic intermediate biosynthesis; chorismate biosynthesis; chorismate from D-erythrose 4-phosphate and phosphoenolpyruvate: step 3/7. It participates in metabolic intermediate biosynthesis; chorismate biosynthesis; chorismate from D-erythrose 4-phosphate and phosphoenolpyruvate: step 4/7. Its pathway is metabolic intermediate biosynthesis; chorismate biosynthesis; chorismate from D-erythrose 4-phosphate and phosphoenolpyruvate: step 5/7. It functions in the pathway metabolic intermediate biosynthesis; chorismate biosynthesis; chorismate from D-erythrose 4-phosphate and phosphoenolpyruvate: step 6/7. In terms of biological role, the AROM polypeptide catalyzes 5 consecutive enzymatic reactions in prechorismate polyaromatic amino acid biosynthesis. The polypeptide is Pentafunctional AROM polypeptide (Candida tropicalis (strain ATCC MYA-3404 / T1) (Yeast)).